The chain runs to 202 residues: LexA repressor (202 aa).

Positions 28 to 48 form a DNA-binding region, H-T-H motif; the sequence is RAEIAQQLGFRSPNAAEEHLK. Residues S119 and K156 each act as for autocatalytic cleavage activity in the active site.

The protein belongs to the peptidase S24 family. As to quaternary structure, homodimer.

The enzyme catalyses Hydrolysis of Ala-|-Gly bond in repressor LexA.. Its function is as follows. Represses a number of genes involved in the response to DNA damage (SOS response), including recA and lexA. In the presence of single-stranded DNA, RecA interacts with LexA causing an autocatalytic cleavage which disrupts the DNA-binding part of LexA, leading to derepression of the SOS regulon and eventually DNA repair. The protein is LexA repressor of Pectobacterium atrosepticum (strain SCRI 1043 / ATCC BAA-672) (Erwinia carotovora subsp. atroseptica).